Consider the following 410-residue polypeptide: MVLSQRQRDELNRAIADYLRSNGYEEAYSVFKKEAELDVNEELDKKYAGLLEKKWTSVIRLQKKVMELESKLNEAKEEFTSGGPLGQKRDPKEWIPRPPEKYALSGHRSPVTRVIFHPVFSVMVSASEDATIKVWDYETGDFERTLKGHTDSVQDISFDHSGKLLASCSADMTIKLWDFQGFECIRTMHGHDHNVSSVAIMPNGDHIVSASRDKTIKMWEVQTGYCVKTFTGHREWVRMVRPNQDGTLIASCSNDQTVRVWVVATKECKAELREHEHVVECISWAPESSYSSISEATGSETKKSGKPGPFLLSGSRDKTIKMWDVSTGMCLMTLVGHDNWVRGVLFHSGGKFILSCADDKTLRVWDYKNKRCMKTLNAHEHFVTSLDFHKTAPYVVTGSVDQTVKVWECR.

Residues 1-38 (MVLSQRQRDELNRAIADYLRSNGYEEAYSVFKKEAELD) form a required for self-association and interaction with PAFAH1B2 and PAFAH1B3 region. Residues 1 to 66 (MVLSQRQRDE…SVIRLQKKVM (66 aa)) are interaction with NDE1. An interaction with NDEL1 region spans residues 1 to 102 (MVLSQRQRDE…EWIPRPPEKY (102 aa)). Residues 7–39 (QRDELNRAIADYLRSNGYEEAYSVFKKEAELDV) form the LisH domain. Lys53 carries the N6-acetyllysine modification. Residues 56-82 (TSVIRLQKKVMELESKLNEAKEEFTSG) are a coiled coil. The interval 83 to 410 (GPLGQKRDPK…DQTVKVWECR (328 aa)) is interaction with dynein and dynactin. 7 WD repeats span residues 106–147 (GHRS…RTLK), 148–187 (GHTD…CIRT), 190–229 (GHDH…CVKT), 232–271 (GHRE…CKAE), 274–333 (EHEH…CLMT), 336–377 (GHDN…KTLN), and 378–410 (AHEH…WECR). At Ser109 the chain carries Phosphoserine. Residues 367–409 (YKNKRCMKTLNAHEHFVTSLDFHKTAPYVVTGSVDQTVKVWEC) are interaction with DCX. The tract at residues 388–410 (FHKTAPYVVTGSVDQTVKVWECR) is interaction with NDEL1.

This sequence belongs to the WD repeat LIS1/nudF family. Component of the cytosolic PAF-AH (I) heterotetrameric enzyme, which is composed of PAFAH1B1 (beta), PAFAH1B2 (alpha2) and PAFAH1B3 (alpha1) subunits. The catalytic activity of the enzyme resides in the alpha1 (PAFAH1B3) and alpha2 (PAFAH1B2) subunits, whereas the beta subunit (PAFAH1B1) has regulatory activity. Trimer formation is not essential for the catalytic activity. Interacts with the catalytic dimer of PAF-AH (I) heterotetrameric enzyme: interacts with PAFAH1B2 homodimer (alpha2/alpha2 homodimer), PAFAH1B3 homodimer (alpha1/alpha1 homodimer) and PAFAH1B2-PAFAH1B3 heterodimer (alpha2/alpha1 heterodimer). Interacts with IQGAP1, KATNB1 and NUDC. Interacts with DAB1 when DAB1 is phosphorylated in response to RELN/reelin signaling. Can self-associate. Interacts with DCX, dynein, dynactin, NDE1, NDEL1 and RSN. Interacts with DISC1, and this interaction is enhanced by NDEL1. Interacts with INTS13. Interacts with DCDC1. In terms of tissue distribution, fairly ubiquitous expression in both the frontal and occipital areas of the brain.

The protein localises to the cytoplasm. It localises to the cytoskeleton. It is found in the microtubule organizing center. Its subcellular location is the centrosome. The protein resides in the spindle. The protein localises to the nucleus membrane. Its function is as follows. Regulatory subunit (beta subunit) of the cytosolic type I platelet-activating factor (PAF) acetylhydrolase (PAF-AH (I)), an enzyme that catalyzes the hydrolyze of the acetyl group at the sn-2 position of PAF and its analogs and participates in PAF inactivation. Regulates the PAF-AH (I) activity in a catalytic dimer composition-dependent manner. Required for proper activation of Rho GTPases and actin polymerization at the leading edge of locomoting cerebellar neurons and postmigratory hippocampal neurons in response to calcium influx triggered via NMDA receptors. Positively regulates the activity of the minus-end directed microtubule motor protein dynein. May enhance dynein-mediated microtubule sliding by targeting dynein to the microtubule plus end. Required for several dynein- and microtubule-dependent processes such as the maintenance of Golgi integrity, the peripheral transport of microtubule fragments and the coupling of the nucleus and centrosome. Required during brain development for the proliferation of neuronal precursors and the migration of newly formed neurons from the ventricular/subventricular zone toward the cortical plate. Neuronal migration involves a process called nucleokinesis, whereby migrating cells extend an anterior process into which the nucleus subsequently translocates. During nucleokinesis dynein at the nuclear surface may translocate the nucleus towards the centrosome by exerting force on centrosomal microtubules. May also play a role in other forms of cell locomotion including the migration of fibroblasts during wound healing. Required for dynein recruitment to microtubule plus ends and BICD2-bound cargos. May modulate the Reelin pathway through interaction of the PAF-AH (I) catalytic dimer with VLDLR. This chain is Platelet-activating factor acetylhydrolase IB subunit beta, found in Homo sapiens (Human).